Reading from the N-terminus, the 79-residue chain is MRQRGQEHLPTSVKSEPRACNNPTVAENRRVPSGLAAVIRNLTALWNPSLGVSERRGGDWEPSRIPRLWARVGWIQLPG.

Positions 1-27 (MRQRGQEHLPTSVKSEPRACNNPTVAE) are disordered.

This is an uncharacterized protein from Homo sapiens (Human).